A 326-amino-acid chain; its full sequence is Phospho-N-acetylmuramoyl-pentapeptide-transferase (326 aa).

The next 9 helical transmembrane spans lie at 3 to 23 (ISISAGIVTFLLTLVGIPAFI), 51 to 71 (TMGGLVFLITSVLVAFFFALF), 79 to 99 (VGMILFILVLYGLVGFLDDFL), 115 to 135 (LALQLLGGVIFYLFYERGGDI), 138 to 158 (VFGYPVHLGFFYIFFALFWLV), 169 to 189 (GVDGLASISVVISLFAYGVIA), 195 to 215 (MDILLVILAMIGGLLGFFIFN), 221 to 243 (VFMGDVGSLALGGMLAAISMALH), and 306 to 326 (FFFWGVGLLASLLTLAILYLM).

The protein belongs to the glycosyltransferase 4 family. MraY subfamily. The cofactor is Mg(2+).

The protein localises to the cell membrane. The catalysed reaction is UDP-N-acetyl-alpha-D-muramoyl-L-alanyl-gamma-D-glutamyl-L-lysyl-D-alanyl-D-alanine + di-trans,octa-cis-undecaprenyl phosphate = Mur2Ac(oyl-L-Ala-gamma-D-Glu-L-Lys-D-Ala-D-Ala)-di-trans,octa-cis-undecaprenyl diphosphate + UMP. The protein operates within cell wall biogenesis; peptidoglycan biosynthesis. Functionally, catalyzes the initial step of the lipid cycle reactions in the biosynthesis of the cell wall peptidoglycan: transfers peptidoglycan precursor phospho-MurNAc-pentapeptide from UDP-MurNAc-pentapeptide onto the lipid carrier undecaprenyl phosphate, yielding undecaprenyl-pyrophosphoryl-MurNAc-pentapeptide, known as lipid I. The polypeptide is Phospho-N-acetylmuramoyl-pentapeptide-transferase (Streptococcus pneumoniae serotype 2 (strain D39 / NCTC 7466)).